Consider the following 193-residue polypeptide: Protein hunchback (193 aa).

Disordered regions lie at residues 16–126 and 146–193; these read SHHH…ATTT and SNDK…KYMA. A compositionally biased stretch (basic residues) spans 17 to 31; sequence HHHHHHHAHHSHHQH. Low complexity-rich tracts occupy residues 35 to 46 and 56 to 77; these read SNSNSNASSPHQ and SSNNLQLEQYLKQQQQQQQQQQ. Polar residues predominate over residues 89–99; that stretch reads PSPSNNDQNSR. Residues 174-193 are compositionally biased toward basic and acidic residues; the sequence is EPEKEHDLMSNSSEDMKYMA.

Belongs to the hunchback C2H2-type zinc-finger protein family.

It is found in the nucleus. Gap class segmentation protein that controls development of head structures. The protein is Protein hunchback (hb) of Drosophila iki (Fruit fly).